A 396-amino-acid chain; its full sequence is Anticodon nuclease (396 aa).

Its function is as follows. Anticodon endonuclease (ACNase) that triggers the cleavage ligation of tRNA(Lys). It is activated by T4 stp protein and masked by the prrD protein (the endonuclease subunit of EcoprrI). The prr locus restricts phage T4 mutants lacking polynucleotide kinase or RNA ligase; T4 mutants lacking these genes manifest a T4-induced anticodon nuclease (ACNase). It is thought that Stp and other T4-encoded ACNase factors counteract the masking agents, thus activating the latent ACNase. This chain is Anticodon nuclease, found in Escherichia coli.